Here is a 207-residue protein sequence, read N- to C-terminus: ATP synthase subunit 5, mitochondrial (207 aa).

This sequence belongs to the ATPase delta chain family. In terms of assembly, F-type ATPases have 2 components, CF(1) - the catalytic core - and CF(0) - the membrane proton channel. CF(1) has five subunits: alpha(3), beta(3), gamma(1), delta(1), epsilon(1). CF(0) has three main subunits: a, b and c.

Its subcellular location is the mitochondrion. The protein localises to the mitochondrion inner membrane. Mitochondrial membrane ATP synthase (F(1)F(0) ATP synthase or Complex V) produces ATP from ADP in the presence of a proton gradient across the membrane which is generated by electron transport complexes of the respiratory chain. F-type ATPases consist of two structural domains, F(1) - containing the extramembraneous catalytic core and F(0) - containing the membrane proton channel, linked together by a central stalk and a peripheral stalk. During catalysis, ATP synthesis in the catalytic domain of F(1) is coupled via a rotary mechanism of the central stalk subunits to proton translocation. Part of the complex F(0) domain and the peripheric stalk, which acts as a stator to hold the catalytic alpha(3)beta(3) subcomplex and subunit a/ATP6 static relative to the rotary elements. The polypeptide is ATP synthase subunit 5, mitochondrial (ATP5) (Eremothecium gossypii (strain ATCC 10895 / CBS 109.51 / FGSC 9923 / NRRL Y-1056) (Yeast)).